We begin with the raw amino-acid sequence, 180 residues long: Large ribosomal subunit protein uL6 (180 aa).

It belongs to the universal ribosomal protein uL6 family. As to quaternary structure, part of the 50S ribosomal subunit.

This protein binds to the 23S rRNA, and is important in its secondary structure. It is located near the subunit interface in the base of the L7/L12 stalk, and near the tRNA binding site of the peptidyltransferase center. This Dictyoglomus thermophilum (strain ATCC 35947 / DSM 3960 / H-6-12) protein is Large ribosomal subunit protein uL6.